We begin with the raw amino-acid sequence, 440 residues long: tRNA-2-methylthio-N(6)-dimethylallyladenosine synthase (440 aa).

Residues K5–K121 form the MTTase N-terminal domain. Residues C14, C50, C84, C159, C163, and C166 each coordinate [4Fe-4S] cluster. In terms of domain architecture, Radical SAM core spans R145–E375. A TRAM domain is found at K378–R440.

This sequence belongs to the methylthiotransferase family. MiaB subfamily. In terms of assembly, monomer. The cofactor is [4Fe-4S] cluster.

Its subcellular location is the cytoplasm. The catalysed reaction is N(6)-dimethylallyladenosine(37) in tRNA + (sulfur carrier)-SH + AH2 + 2 S-adenosyl-L-methionine = 2-methylsulfanyl-N(6)-dimethylallyladenosine(37) in tRNA + (sulfur carrier)-H + 5'-deoxyadenosine + L-methionine + A + S-adenosyl-L-homocysteine + 2 H(+). Catalyzes the methylthiolation of N6-(dimethylallyl)adenosine (i(6)A), leading to the formation of 2-methylthio-N6-(dimethylallyl)adenosine (ms(2)i(6)A) at position 37 in tRNAs that read codons beginning with uridine. This Geotalea uraniireducens (strain Rf4) (Geobacter uraniireducens) protein is tRNA-2-methylthio-N(6)-dimethylallyladenosine synthase.